The sequence spans 275 residues: Ceramide synthase (275 aa).

One can recognise a TLC domain in the interval 34–261 (ADAVIVSARL…ICRGACRLFR (228 aa)). 4 helical membrane passes run 130–150 (FLMV…SVVW), 159–179 (LGCM…KILI), 194–214 (ALML…LYWA), and 232–252 (AHVN…FFLI).

In terms of tissue distribution, each isoform has a distinct expression pattern. Isoform 1 is highly expressed in brain. Isoform 2 is expressed at low levels, if any, in all analyzed tissues, with slightly higher levels in testis. Isoform 3 is expressed at very high levels in testis and, at lower levels, in white adipose tissue. In epididymal fat, isoform 3 is expressed at higher levels in obese mice compared with lean mice. By contrast, isoform 1 and 2 levels are significantly lower in obese mice compared with lean mice.

Its subcellular location is the golgi apparatus membrane. It localises to the endoplasmic reticulum membrane. The enzyme catalyses sphing-4-enine + octadecanoyl-CoA = N-octadecanoylsphing-4-enine + CoA + H(+). The catalysed reaction is eicosanoyl-CoA + sphing-4-enine = N-eicosanoyl-sphing-4-enine + CoA + H(+). It carries out the reaction sphing-4-enine + hexadecanoyl-CoA = N-hexadecanoylsphing-4-enine + CoA + H(+). In terms of biological role, involved in ceramide synthesis. In vitro, isoform 3 stimulates the production of C16-, C18- and C20-ceramides, isoform 1 slightly increases the levels of C18- and C20-ceramides, while isoform 2 exhibits only minimal activity. May interfere with adipogenesis by stimulating ceramide synthesis. In Mus musculus (Mouse), this protein is Ceramide synthase (Tlcd3b).